Here is a 137-residue protein sequence, read N- to C-terminus: Protein BNS1 (137 aa).

Functionally, component of the FEAR (CDC14 early anaphase release) network which promotes CDC14 release from the nucleolus during early anaphase and is required for the efficient segregation of telomeric and nucleolar regions. Although BNS1 can partially compensate for a lack of SPO12 function when overexpressed, it does not appear to play any role in controlling meiotic nuclear division. The protein is Protein BNS1 (BNS1) of Saccharomyces cerevisiae (strain ATCC 204508 / S288c) (Baker's yeast).